The sequence spans 373 residues: Glutamate 5-kinase (373 aa).

An ATP-binding site is contributed by Lys15. Residues Ser55, Asp142, and Asn154 each coordinate substrate. Residues 174–175 (TD) and 216–222 (TGGMATK) each bind ATP. The PUA domain occupies 281-359 (AGRIIVDDGA…SRIEAILGYR (79 aa)).

Belongs to the glutamate 5-kinase family.

It localises to the cytoplasm. It carries out the reaction L-glutamate + ATP = L-glutamyl 5-phosphate + ADP. It participates in amino-acid biosynthesis; L-proline biosynthesis; L-glutamate 5-semialdehyde from L-glutamate: step 1/2. Catalyzes the transfer of a phosphate group to glutamate to form L-glutamate 5-phosphate. The protein is Glutamate 5-kinase of Pelobacter propionicus (strain DSM 2379 / NBRC 103807 / OttBd1).